A 471-amino-acid polypeptide reads, in one-letter code: MSQGTLFDKVWDLHTVDVLPSGQTQLFIGLHLIHEVTSPQAFTMLKDRGLNVLYPQRTVATVDHIVPTENQARPFADTLAEEMMQALEQSCQDHGITFHNIGSGKQGIVHVIAPEQGLTQPGMTIACGDSHTSTHGAFGAISFGIGTSQVRDVLASQTLALAKLKVRKVEVNGTLPAGVYAKDVILHIIRTLGVKGGVGYAYEFAGTTFEQMTMDERMTVCNMSIEGGARCGYVNPDTITFEYLKGREAAPKGADWDQAVAWWQSIRSDADAVYDDVVVFDAQDISPTVTWGITPGQGIGIDEAIPGLDHFTDADQPIASEAYKYMDLQPGQPIQGTKVDVCFIGSCTNGRISDLREAAQFAKGNQVAAGVKAFVVPGSEQVKQQAESEGLHHIFEQAGFEWREPGCSMCLAMNPDKLQGRQLSASSSNRNFKGRQGSASGRTLLMSPAMVVAAAIKGEVADVRQIPKASP.

[4Fe-4S] cluster-binding residues include C347, C407, and C410.

This sequence belongs to the aconitase/IPM isomerase family. LeuC type 1 subfamily. As to quaternary structure, heterodimer of LeuC and LeuD. [4Fe-4S] cluster is required as a cofactor.

It catalyses the reaction (2R,3S)-3-isopropylmalate = (2S)-2-isopropylmalate. Its pathway is amino-acid biosynthesis; L-leucine biosynthesis; L-leucine from 3-methyl-2-oxobutanoate: step 2/4. Its function is as follows. Catalyzes the isomerization between 2-isopropylmalate and 3-isopropylmalate, via the formation of 2-isopropylmaleate. In Acaryochloris marina (strain MBIC 11017), this protein is 3-isopropylmalate dehydratase large subunit.